An 806-amino-acid polypeptide reads, in one-letter code: Leucine--tRNA ligase (806 aa).

The short motif at 40-51 (PYPSGSGLHVGH) is the 'HIGH' region element. Residues 576-580 (KMSKS) carry the 'KMSKS' region motif. K579 is a binding site for ATP.

It belongs to the class-I aminoacyl-tRNA synthetase family.

Its subcellular location is the cytoplasm. The enzyme catalyses tRNA(Leu) + L-leucine + ATP = L-leucyl-tRNA(Leu) + AMP + diphosphate. This is Leucine--tRNA ligase from Chlorobium phaeobacteroides (strain BS1).